A 216-amino-acid chain; its full sequence is Somatotropin (216 aa).

The first 26 residues, Met1 to Ala26, serve as a signal peptide directing secretion. His45 is a binding site for Zn(2+). Cys78 and Cys189 are oxidised to a cystine. Ser131 bears the Phosphoserine mark. Position 198 (Glu198) interacts with Zn(2+). The cysteines at positions 206 and 214 are disulfide-linked.

Belongs to the somatotropin/prolactin family.

The protein localises to the secreted. Plays an important role in growth control. Its major role in stimulating body growth is to stimulate the liver and other tissues to secrete IGF1. It stimulates both the differentiation and proliferation of myoblasts. It also stimulates amino acid uptake and protein synthesis in muscle and other tissues. This Sus scrofa (Pig) protein is Somatotropin (GH1).